Reading from the N-terminus, the 1829-residue chain is MARLLPPTGTSVFRRFTPESLVEIERLIQEKSTREELEGAEEEPQAPSSDLEAGKCLPMIYGDPPGDLLNTPLEDIDPFYKTQKTFIVISKGNTIFRFSSEPAMFCISPFSIVRRGAIKILIHSLFSMFIMITILSNCVFMTMSNPPAWSKTVEYVFTGIYTFEATVKVLSRGFCIGPFTFLRDPWNWLDFMVISMAYVTEFVDLGNVSALRTFRVLRALKTITVIPGLKTIVGALIQSVKKMIDVMILTIFALAVFALIGLQLFMGNLRQKCIRWPILNSTIFDVYNSNMVNDTTLNVTDTFDFKAYINNEENQYFLEGSLDALLCGNSSDAGRCPEGYTCMKAGRNPNYGYTSYDNFGWAFLALFRLMTQDFWENLFQLTLRAAGKTYMIFFVVVIFLGSFYLINLILAVVAMAYDEQNEATLAEARDKEEEFQRLLEQLKNQETGSKASLASQKTQSRGSNRTGSLHDLADEDVIKDCNGRIVPRLIVNRVSSNKELSAEEDQKSLSSKHSMQYLDQPKLSKRTASALSVLTATMEGLEDAQRPCPPGWYKFADMFLKWDCCAPWILFKKWVHFVVMDPFVDLGITICIVLNTLFMAMEHYPMSPHFEHVLSVGNLVFTGIFTAEMVFKLIAMDPYYYFQVGWNIFDSIIVTLSLVELGLANVQGLSVLRSFRLLRVFKLAKSWPTLNMLIKIIGNSVGALGNLTLVLAIIVFIFAVVGMQLFGKSYKDCVCKISEDCELPRWHMNDFFHSFLIVFRILCGEWIETMWDCMEVAGASMCLIVFMMVMVIGNLVVLNLFLALLLSSFSGDNLSGGDDDGEMNNLQIAIGRITRGIDWVKALVASMVQRILGKKPDNTKEEGEGDIELYALNHLDEGKMADGLTNCLSPTLTVPIARCESDVEEDEDSESSDEEDAKATLNDGDSSVCSTVDYQPPEPEPEPEEVEEEEPEPEEPEACFTEGCIRRCACLSVDITEGWGKKWWNLRRTCFTIVEHDYFETFIIFMILLSSGALAFEDINIERRRVIKTILEYADKVFTYIFIVEMLLKWVAYGFKTYFTNAWCWLDFLIVDVSLVSLTANLMGYSELGAIKSLRTLRALRPLRALSRFEGMRVVVNALVGAIPSIFNVLLVCLIFWLIFSIMGVNLFAGKFYHCINTTTEERIPMDVVNNKSDCMALMYTNEVRWVNVKVNYDNVGLGYLSLLQIATFKGWMDIMYAAVDSREVDEQPSYEINLYMYLYFVIFIIFGSFFTLNLFIGVIIDNFNQQKSKFGGKDIFMTEEQKKYYNAMKKLGAKKRPKPIPRPSNIIQGLVFDFISKQFFDIFIMVLICLNMVTMMIETDDQSAEKEYVLYQINLVFIVVFTSECVLKLFALRQYFFTIGWNVFDFVVVILSIAGLMLSDIIEKYFVSPTLFRVIRLARIGRVLRLIRGAKGIRTLLFALMMSLPALFNIGLLLFLIMFIFSIFGMSNFAYVKKQAGIDDIFNFETFGGSIICLFEITTSAGWDGLLLPILNSGPPDCDPDFENPGTDVRGNCGNPGMGIMFFCSYIIMSFLVVVNMYIAIILENFNNAQEESGDPLCEDDFDMFDETWEKFDVDATQFIEYDRLFDFVDALQEPLRIAKPNRLKLISMDIPIVNGDKIHSQDILLAVTREVLGDTIEMDAMKESIEAKFIMNNPTSASFEPIITTLRRKEEERAAIAVQRIYRRHLLKRAIRYACFMRRSKRKVRNPNDNEPPETEGLIARKMNTLYGSNPELAMALELETRPMRPNSQPPKPSQVTQTRASVTFPRPQGQLILPVELTSEVILRSAPITHSLNSSENATTIKESIV.

Over 1–124 (MARLLPPTGT…RGAIKILIHS (124 aa)) the chain is Cytoplasmic. Residues 32 to 52 (STREELEGAEEEPQAPSSDLE) form a disordered region. The stretch at 106–421 (CISPFSIVRR…VVAMAYDEQN (316 aa)) is one I repeat. Residues 125 to 143 (LFSMFIMITILSNCVFMTM) traverse the membrane as a helical segment. Residues 144 to 150 (SNPPAWS) are Extracellular-facing. A helical membrane pass occupies residues 151–171 (KTVEYVFTGIYTFEATVKVLS). Topologically, residues 172–185 (RGFCIGPFTFLRDP) are cytoplasmic. The chain crosses the membrane as a helical span at residues 186-203 (WNWLDFMVISMAYVTEFV). The Extracellular segment spans residues 204–209 (DLGNVS). N-linked (GlcNAc...) asparagine glycosylation is present at N207. Residues 210-226 (ALRTFRVLRALKTITVI) traverse the membrane as a helical segment. Residues 227 to 245 (PGLKTIVGALIQSVKKMID) lie on the Cytoplasmic side of the membrane. Residues 246-265 (VMILTIFALAVFALIGLQLF) form a helical membrane-spanning segment. Residues 266 to 358 (MGNLRQKCIR…PNYGYTSYDN (93 aa)) are Extracellular-facing. The cysteines at positions 273 and 327 are disulfide-linked. N-linked (GlcNAc...) asparagine glycosylation is found at N280, N293, and N329. C336 and C342 are oxidised to a cystine. The pore-forming intramembrane region spans 359-383 (FGWAFLALFRLMTQDFWENLFQLTL). Over 384 to 390 (RAAGKTY) the chain is Extracellular. A helical membrane pass occupies residues 391–411 (MIFFVVVIFLGSFYLINLILA). The Cytoplasmic segment spans residues 412–582 (VVAMAYDEQN…KWVHFVVMDP (171 aa)). Over residues 446 to 467 (ETGSKASLASQKTQSRGSNRTG) the composition is skewed to polar residues. Residues 446 to 468 (ETGSKASLASQKTQSRGSNRTGS) form a disordered region. Residues 564-836 (CCAPWILFKK…QIAIGRITRG (273 aa)) form an II repeat. Residues 583 to 601 (FVDLGITICIVLNTLFMAM) traverse the membrane as a helical segment. The Extracellular portion of the chain corresponds to 602–612 (EHYPMSPHFEH). A helical membrane pass occupies residues 613-632 (VLSVGNLVFTGIFTAEMVFK). Over 633 to 646 (LIAMDPYYYFQVGW) the chain is Cytoplasmic. Residues 647 to 666 (NIFDSIIVTLSLVELGLANV) traverse the membrane as a helical segment. At 667–668 (QG) the chain is on the extracellular side. A helical membrane pass occupies residues 669 to 686 (LSVLRSFRLLRVFKLAKS). Residues 687–702 (WPTLNMLIKIIGNSVG) are Cytoplasmic-facing. The helical transmembrane segment at 703-721 (ALGNLTLVLAIIVFIFAVV) threads the bilayer. Residues 722-750 (GMQLFGKSYKDCVCKISEDCELPRWHMND) are Extracellular-facing. A disulfide bond links C735 and C741. Residues 751–771 (FFHSFLIVFRILCGEWIETMW) constitute an intramembrane region (pore-forming). Residues 772 to 782 (DCMEVAGASMC) lie on the Extracellular side of the membrane. Cysteines 773 and 782 form a disulfide. Residues 783–801 (LIVFMMVMVIGNLVVLNLF) form a helical membrane-spanning segment. The Cytoplasmic portion of the chain corresponds to 802–998 (LALLLSSFSG…TCFTIVEHDY (197 aa)). Positions 901–957 (SDVEEDEDSESSDEEDAKATLNDGDSSVCSTVDYQPPEPEPEPEEVEEEEPEPEEPE) are disordered. Acidic residues predominate over residues 902–916 (DVEEDEDSESSDEED). Residues 923 to 933 (DGDSSVCSTVD) show a composition bias toward polar residues. A compositionally biased stretch (acidic residues) spans 939-957 (PEPEPEEVEEEEPEPEEPE). The stretch at 979 to 1292 (WGKKWWNLRR…KKYYNAMKKL (314 aa)) is one III repeat. A helical transmembrane segment spans residues 999-1016 (FETFIIFMILLSSGALAF). Over 1017–1029 (EDINIERRRVIKT) the chain is Extracellular. The helical transmembrane segment at 1030 to 1048 (ILEYADKVFTYIFIVEMLL) threads the bilayer. Residues 1049–1062 (KWVAYGFKTYFTNA) lie on the Cytoplasmic side of the membrane. Residues 1063 to 1081 (WCWLDFLIVDVSLVSLTAN) traverse the membrane as a helical segment. Over 1082–1089 (LMGYSELG) the chain is Extracellular. The chain crosses the membrane as a helical span at residues 1090 to 1108 (AIKSLRTLRALRPLRALSR). Topologically, residues 1109 to 1125 (FEGMRVVVNALVGAIPS) are cytoplasmic. A helical transmembrane segment spans residues 1126–1145 (IFNVLLVCLIFWLIFSIMGV). Residues 1146–1196 (NLFAGKFYHCINTTTEERIPMDVVNNKSDCMALMYTNEVRWVNVKVNYDNV) lie on the Extracellular side of the membrane. C1155 and C1175 form a disulfide bridge. N1157 and N1171 each carry an N-linked (GlcNAc...) asparagine glycan. The segment at residues 1197 to 1218 (GLGYLSLLQIATFKGWMDIMYA) is an intramembrane region (pore-forming). At 1219-1235 (AVDSREVDEQPSYEINL) the chain is on the extracellular side. The helical transmembrane segment at 1236–1257 (YMYLYFVIFIIFGSFFTLNLFI) threads the bilayer. Residues 1258-1320 (GVIIDNFNQQ…LVFDFISKQF (63 aa)) lie on the Cytoplasmic side of the membrane. Residues 1276 to 1278 (IFM) are important for rapid channel inactivation. The stretch at 1301–1599 (IPRPSNIIQG…WEKFDVDATQ (299 aa)) is one IV repeat. A helical membrane pass occupies residues 1321-1338 (FDIFIMVLICLNMVTMMI). Residues 1339–1349 (ETDDQSAEKEY) are Extracellular-facing. The helical transmembrane segment at 1350–1368 (VLYQINLVFIVVFTSECVL) threads the bilayer. The Cytoplasmic segment spans residues 1369 to 1380 (KLFALRQYFFTI). A helical transmembrane segment spans residues 1381 to 1398 (GWNVFDFVVVILSIAGLM). Residues 1399–1411 (LSDIIEKYFVSPT) are Extracellular-facing. The chain crosses the membrane as a helical span at residues 1412 to 1428 (LFRVIRLARIGRVLRLI). The Cytoplasmic segment spans residues 1429 to 1447 (RGAKGIRTLLFALMMSLPA). The helical transmembrane segment at 1448 to 1465 (LFNIGLLLFLIMFIFSIF) threads the bilayer. Residues 1466–1487 (GMSNFAYVKKQAGIDDIFNFET) lie on the Extracellular side of the membrane. Residues 1488 to 1510 (FGGSIICLFEITTSAGWDGLLLP) constitute an intramembrane region (pore-forming). At 1511–1540 (ILNSGPPDCDPDFENPGTDVRGNCGNPGMG) the chain is on the extracellular side. C1519 and C1534 are joined by a disulfide. The chain crosses the membrane as a helical span at residues 1541 to 1563 (IMFFCSYIIMSFLVVVNMYIAII). The Cytoplasmic segment spans residues 1564 to 1829 (LENFNNAQEE…NATTIKESIV (266 aa)). Positions 1693–1722 (EERAAIAVQRIYRRHLLKRAIRYACFMRRS) constitute an IQ domain. The segment at 1765-1786 (PMRPNSQPPKPSQVTQTRASVT) is disordered.

Belongs to the sodium channel (TC 1.A.1.10) family. Nav1.4/SCN4A subfamily. As to quaternary structure, voltage-gated sodium (Nav) channels consist of an ion-conducting alpha subunit which is functional on its own associated with regulatory beta subunits. In terms of tissue distribution, expressed in skeletal muscle, brain, spinal cord, and eye.

The protein resides in the cell membrane. It catalyses the reaction Na(+)(in) = Na(+)(out). Functionally, pore-forming subunit of a voltage-gated sodium (Nav) channel that directly mediates the depolarizing phase of action potentials in excitable membranes. Navs, also called VGSCs (voltage-gated sodium channels) or VDSCs (voltage-dependent sodium channels), operate by switching between closed and open conformations depending on the voltage difference across the membrane. In the open conformation they allow Na(+) ions to selectively pass through the pore, along their electrochemical gradient. The influx of Na+ ions provokes membrane depolarization, initiating the propagation of electrical signals throughout cells and tissues. The polypeptide is Sodium channel protein type 4 subunit alpha A (scn4aa) (Danio rerio (Zebrafish)).